Consider the following 1208-residue polypeptide: DNA-directed RNA polymerase subunit beta (1208 aa).

Residues 1182 to 1208 (EKKAAEQVEDEKDDVIQNFETAEDNLD) form a disordered region.

This sequence belongs to the RNA polymerase beta chain family. As to quaternary structure, the RNAP catalytic core consists of 2 alpha, 1 beta, 1 beta' and 1 omega subunit. When a sigma factor is associated with the core the holoenzyme is formed, which can initiate transcription.

It catalyses the reaction RNA(n) + a ribonucleoside 5'-triphosphate = RNA(n+1) + diphosphate. Its function is as follows. DNA-dependent RNA polymerase catalyzes the transcription of DNA into RNA using the four ribonucleoside triphosphates as substrates. In Enterococcus faecium (Streptococcus faecium), this protein is DNA-directed RNA polymerase subunit beta.